We begin with the raw amino-acid sequence, 480 residues long: MTRFIDRVVIHARAGNGGNGCASVHREKFKPLGGPDGGNGGRGGSVVFVVDPQVHTLLDFHFHPHVVAPSGKQGAGSNRDGAAGTDLEVKVPDGTVVLDEHGQILADLVGEGTRFEAAAGGRGGLGNAALASRARKAPGFALLGEKGESRDLTLELKTVADVGLVGFPSAGKSSLVSTISAAKPKIADYPFTTLAPNLGVVSAGEHTYTVADVPGLIPGASQGRGLGLDFLRHIERCAVLVHVIDCATLEPGRDPISDIEALEAELAAYTPTLQGDSTLGDLAERPRAVVLNKIDVPEARELADFVREEIEAKFGWPVFEISTVAREGLRQLTFALWDMVAAYRAAQPAAVSRRPVIRPIPVDETAFSVVPDGQGGFIVKGTRPQRWVAQTNFDNDEAVGYLGDRLARLGVEDALLKLGARPGCAVTIGDMTFDWEPQTPAGVDVPLTGRGTDVRLEQTDRVGADERKAARKARRQSGDE.

Residues 2-159 (TRFIDRVVIH…RDLTLELKTV (158 aa)) enclose the Obg domain. The OBG-type G domain occupies 160 to 341 (ADVGLVGFPS…LTFALWDMVA (182 aa)). GTP is bound by residues 166–173 (GFPSAGKS), 191–195 (FTTLA), 212–215 (DVPG), 292–295 (NKID), and 322–324 (STV). Mg(2+) contacts are provided by S173 and T193. The region spanning 359-437 (PIPVDETAFS…IGDMTFDWEP (79 aa)) is the OCT domain. The interval 441-480 (AGVDVPLTGRGTDVRLEQTDRVGADERKAARKARRQSGDE) is disordered. The span at 452-468 (TDVRLEQTDRVGADERK) shows a compositional bias: basic and acidic residues. The span at 469–480 (AARKARRQSGDE) shows a compositional bias: basic residues.

This sequence belongs to the TRAFAC class OBG-HflX-like GTPase superfamily. OBG GTPase family. In terms of assembly, monomer. Mg(2+) serves as cofactor.

Its subcellular location is the cytoplasm. An essential GTPase which binds GTP, GDP and possibly (p)ppGpp with moderate affinity, with high nucleotide exchange rates and a fairly low GTP hydrolysis rate. Plays a role in control of the cell cycle, stress response, ribosome biogenesis and in those bacteria that undergo differentiation, in morphogenesis control. The protein is GTPase Obg of Mycolicibacterium vanbaalenii (strain DSM 7251 / JCM 13017 / BCRC 16820 / KCTC 9966 / NRRL B-24157 / PYR-1) (Mycobacterium vanbaalenii).